The primary structure comprises 977 residues: Probable RNA-dependent RNA polymerase 5 (977 aa).

Residues 103 to 122 (EEMSVDSDAPSPKSLKSEDK) are disordered.

This sequence belongs to the RdRP family.

It catalyses the reaction RNA(n) + a ribonucleoside 5'-triphosphate = RNA(n+1) + diphosphate. Functionally, probably involved in the RNA silencing pathway and required for the generation of small interfering RNAs (siRNAs). This chain is Probable RNA-dependent RNA polymerase 5 (RDR5), found in Arabidopsis thaliana (Mouse-ear cress).